Reading from the N-terminus, the 138-residue chain is Small ribosomal subunit protein uS11c (138 aa).

Belongs to the universal ribosomal protein uS11 family. As to quaternary structure, part of the 30S ribosomal subunit.

It localises to the plastid. The protein localises to the chloroplast. The polypeptide is Small ribosomal subunit protein uS11c (Illicium oligandrum (Star anise)).